The sequence spans 341 residues: GTPase Obg (341 aa).

Residues 1-159 (MKFLDQAKVY…RAIWLRLKLI (159 aa)) enclose the Obg domain. The 168-residue stretch at 160–327 (ADAGLVGLPN…VLRAGAHIIE (168 aa)) folds into the OBG-type G domain. Residues 166-173 (GLPNAGKS), 191-195 (FTTLH), 212-215 (DIPG), 279-282 (SQID), and 308-310 (SAV) each bind GTP. Mg(2+) contacts are provided by S173 and T193.

The protein belongs to the TRAFAC class OBG-HflX-like GTPase superfamily. OBG GTPase family. As to quaternary structure, monomer. The cofactor is Mg(2+).

It localises to the cytoplasm. An essential GTPase which binds GTP, GDP and possibly (p)ppGpp with moderate affinity, with high nucleotide exchange rates and a fairly low GTP hydrolysis rate. Plays a role in control of the cell cycle, stress response, ribosome biogenesis and in those bacteria that undergo differentiation, in morphogenesis control. The protein is GTPase Obg of Bartonella tribocorum (strain CIP 105476 / IBS 506).